The sequence spans 313 residues: Ribose-phosphate pyrophosphokinase (313 aa).

Residues 40-42 and 98-99 each bind ATP; these read DGE and RQ. Histidine 132 and aspartate 172 together coordinate Mg(2+). The active site involves lysine 195. D-ribose 5-phosphate-binding positions include arginine 197, aspartate 221, and 225–229; that span reads DTAGT.

Belongs to the ribose-phosphate pyrophosphokinase family. Class I subfamily. In terms of assembly, homohexamer. Requires Mg(2+) as cofactor.

It is found in the cytoplasm. The catalysed reaction is D-ribose 5-phosphate + ATP = 5-phospho-alpha-D-ribose 1-diphosphate + AMP + H(+). It participates in metabolic intermediate biosynthesis; 5-phospho-alpha-D-ribose 1-diphosphate biosynthesis; 5-phospho-alpha-D-ribose 1-diphosphate from D-ribose 5-phosphate (route I): step 1/1. Functionally, involved in the biosynthesis of the central metabolite phospho-alpha-D-ribosyl-1-pyrophosphate (PRPP) via the transfer of pyrophosphoryl group from ATP to 1-hydroxyl of ribose-5-phosphate (Rib-5-P). The polypeptide is Ribose-phosphate pyrophosphokinase (Porphyromonas gingivalis (strain ATCC BAA-308 / W83)).